The sequence spans 600 residues: DNA primase (600 aa).

Residues 38-62 form a CHC2-type zinc finger; it reads CPFHDEKTPSFIVYPTRGHYHCYGC. The 81-residue stretch at 253–333 folds into the Toprim domain; the sequence is KRVILVEGQA…GIAVIVCRLP (81 aa). Mg(2+) is bound by residues glutamate 259, aspartate 304, and aspartate 306.

It belongs to the DnaG primase family. In terms of assembly, monomer. Interacts with DnaB. The cofactor is Zn(2+). Mg(2+) serves as cofactor.

It catalyses the reaction ssDNA + n NTP = ssDNA/pppN(pN)n-1 hybrid + (n-1) diphosphate.. In terms of biological role, RNA polymerase that catalyzes the synthesis of short RNA molecules used as primers for DNA polymerase during DNA replication. In Chlamydia muridarum (strain MoPn / Nigg), this protein is DNA primase.